We begin with the raw amino-acid sequence, 75 residues long: Endogenous retrovirus group K member 7 Np9 protein (75 aa).

The disordered stretch occupies residues 24-43; the sequence is PKRQRPSRTGHDDDGGFVEK. Positions 32-43 are enriched in basic and acidic residues; that stretch reads TGHDDDGGFVEK.

It is found in the nucleus. Functionally, may possess a function in tumorigenesis. This is Endogenous retrovirus group K member 7 Np9 protein (ERVK-7) from Homo sapiens (Human).